We begin with the raw amino-acid sequence, 590 residues long: Protein NRT1/ PTR FAMILY 6.3 (590 aa).

2 consecutive transmembrane segments (helical) span residues 46–66 (LTTL…MHLG) and 77–97 (FLGT…TFLG). At Thr101 the chain carries Phosphothreonine; by CIPK23. 10 helical membrane passes run 102–122 (IAIF…STII), 143–163 (GIQL…TGGV), 193–213 (FFFC…YVQD), 219–239 (WGYG…LAGT), 342–362 (MLPI…LTTL), 374–394 (IGSF…GLLL), 423–443 (IGLG…VELK), 460–480 (LGFY…ALIY), 501–521 (GLLL…VTIV), and 542–562 (YNFY…FLVF). 2 residues coordinate substrate: His356 and Thr360.

Belongs to the major facilitator superfamily. Proton-dependent oligopeptide transporter (POT/PTR) (TC 2.A.17) family. Monomer and homodimer. The dimer has the 2 monomers in the same orientation. Interacts with CIPK23. Acts as a high-affinity nitrate transporter when phosphorylated and as a low-affinity transporter when dephosphorylated. Forms homodimer when unphosphorylated and monomer when phosphorylated. Low nitrogen concentration in the medium stimulates phosphorylation. Phosphorylation also regulates the nitrate signaling. Expressed in the stele in lateral root primordia before emergence and in the tip of primary and emerged lateral roots. Detected in emerging and immature leaves, guard cells, flower buds, style, stigma, anthers and pollen grains. Not detected in the shoot apical meristem.

It is found in the membrane. Dual affinity nitrate transporter. Involved in proton-dependent nitrate uptake and in the regulation of the nitrate transporter NRT2.1. Also acts as a nitrate sensor that trigger a specific signaling pathway stimulating lateral root growth and seed germination. The uptake activity is not required for sensor function. Displays an auxin transport facilitation inhibited by high nitrate concentration. Required to prevent auxin accumulation in preemerged lateral root primordia and young lateral roots when external nitrate concentration is low or null. May be involved in the basipetal transport of auxin out of the lateral root tips. Acts as a bidirectional transporter involved in root-to-shoot nitrate translocation. Recognizes specifically nitrate and chlorate, but not nitrite, alanine, sulfate, phosphate or the di-peptide Ala-Ala. The chain is Protein NRT1/ PTR FAMILY 6.3 (NPF6.3) from Arabidopsis thaliana (Mouse-ear cress).